We begin with the raw amino-acid sequence, 172 residues long: Gamma-crystallin-4 (172 aa).

Beta/gamma crystallin 'Greek key' domains follow at residues 1 to 37 (IFFYEERNFQGRCYECSSECSDLSSYFNRCNSIRVES) and 38 to 80 (GNWI…RFIP). Residues 81–85 (HPHSQ) are connecting peptide. 2 consecutive Beta/gamma crystallin 'Greek key' domains span residues 86 to 126 (YKMR…NVSD) and 127 to 169 (GHWM…RRVH).

Belongs to the beta/gamma-crystallin family. Monomer.

Its function is as follows. Crystallins are the dominant structural components of the vertebrate eye lens. The polypeptide is Gamma-crystallin-4 (cryg4) (Xenopus laevis (African clawed frog)).